Here is a 440-residue protein sequence, read N- to C-terminus: Asparagine--tRNA ligase (440 aa).

It belongs to the class-II aminoacyl-tRNA synthetase family. Homodimer.

Its subcellular location is the cytoplasm. It carries out the reaction tRNA(Asn) + L-asparagine + ATP = L-asparaginyl-tRNA(Asn) + AMP + diphosphate + H(+). This chain is Asparagine--tRNA ligase, found in Chloroflexus aurantiacus (strain ATCC 29364 / DSM 637 / Y-400-fl).